The following is a 31-amino-acid chain: Cyclotide mech-4 (31 aa).

The cyclopeptide (Gly-Asp) cross-link spans 1–31 (GSIPCGESCVYIPCISSLLGCSCKSKVCYKD). 3 disulfide bridges follow: Cys-5–Cys-21, Cys-9–Cys-23, and Cys-14–Cys-28.

This is a cyclic peptide. In terms of processing, contains 3 disulfide bonds.

Probably participates in a plant defense mechanism (Potential). Binds to and induces leakage in phospholipd membranes, particularly ones containing 1-palmitoyl-2-oleophosphatidylethanolamine (POPE). The sequence is that of Cyclotide mech-4 from Melicytus chathamicus (Chatham Island mahoe).